We begin with the raw amino-acid sequence, 238 residues long: Glycerol uptake facilitator protein 4 (238 aa).

2 helical membrane-spanning segments follow: residues 2 to 22 (IHQL…GVGV) and 39 to 59 (IFAI…FGNV). The NPA 1 motif lies at 62–64 (NPA). The next 3 helical transmembrane spans lie at 80–100 (FIPY…IVWI), 135–155 (FFVE…ISEV), and 158–178 (PGIV…GLGG). An NPA 2 motif is present at residues 185 to 187 (NLA). A helical transmembrane segment spans residues 211 to 231 (YGIIVPGIAPFVGAACAALFM).

It belongs to the MIP/aquaporin (TC 1.A.8) family.

The protein resides in the cell membrane. In terms of biological role, transporter that facilitates the transmembrane diffusion of water, dihydroxyacetone, glycerol, urea, H(2)O(2) and D/L-lactic acid. Is involved in the cellular racemization of lactate and lactate metabolism, but has likely a more general physiological role. The transported molecule is indeed lactic acid and not the lactate anion, in agreement with the assumption that, with very few exceptions, MIPs (major intrinsic proteins) only facilitate the transport of uncharged solutes. The sequence is that of Glycerol uptake facilitator protein 4 from Lactiplantibacillus plantarum (strain ATCC BAA-793 / NCIMB 8826 / WCFS1) (Lactobacillus plantarum).